The following is a 662-amino-acid chain: Sporulation protein RMD8 (662 aa).

Disordered regions lie at residues 1 to 136 (MSYK…RTSK), 286 to 320 (YELETSGNNNNANQDTTTVPDHLPNPVGQQDSFNP), and 346 to 406 (LKKE…QNDF). At serine 2 the chain carries N-acetylserine. Residues 99-121 (SARREERLSSSSSDRPRQYERLS) show a composition bias toward basic and acidic residues. The span at 286–304 (YELETSGNNNNANQDTTTV) shows a compositional bias: polar residues. Residues 383 to 395 (SSRSPASPSSIST) are compositionally biased toward low complexity. Residues 630 to 647 (VTWWFILVILFGVIFSLT) traverse the membrane as a helical segment.

The protein belongs to the RMD1/sif2 family.

Its subcellular location is the membrane. Its function is as follows. Required for sporulation. This Saccharomyces cerevisiae (strain ATCC 204508 / S288c) (Baker's yeast) protein is Sporulation protein RMD8 (RMD8).